Consider the following 398-residue polypeptide: Argininosuccinate synthase (398 aa).

Residue 8–16 (AYSGGLDTS) coordinates ATP. Residue Tyr-87 coordinates L-citrulline. Gly-117 serves as a coordination point for ATP. Thr-119, Asn-123, and Asp-124 together coordinate L-aspartate. Position 123 (Asn-123) interacts with L-citrulline. L-citrulline is bound by residues Arg-127, Ser-175, Glu-260, and Tyr-272.

This sequence belongs to the argininosuccinate synthase family. Type 1 subfamily. Homotetramer.

Its subcellular location is the cytoplasm. The enzyme catalyses L-citrulline + L-aspartate + ATP = 2-(N(omega)-L-arginino)succinate + AMP + diphosphate + H(+). Its pathway is amino-acid biosynthesis; L-arginine biosynthesis; L-arginine from L-ornithine and carbamoyl phosphate: step 2/3. This Mycobacterium avium (strain 104) protein is Argininosuccinate synthase.